The chain runs to 562 residues: uncharacterized protein (562 aa).

The next 5 helical transmembrane spans lie at 4 to 26 (VRWIISTAPEIFLLLAVAIGTML), 33 to 55 (GFAIGTTACILIVSVLIGQLGTF), 59 to 78 (ALLRIVLFSLFVFTIGYKSG), 90 to 112 (LAQVAMALVLGGTGLVIVLAFAF), and 159 to 181 (IAAGYAVTYVLGYILTLLYVPFA). RCK C-terminal domains are found at residues 207–287 (PKTE…IIGT) and 295–375 (LKAI…QVGQ). 6 consecutive transmembrane segments (helical) span residues 385-402 (IAFLAAGIAAGLLAGLVS), 406-428 (GGIALTLGGGGGALIAGLLCGWL), 449-471 (LGLGGFIAAIGLANGHAAWVAIQ), 476-498 (LLVGMGLVVTLVPLVVATLFAYH), 505-524 (VITCGALAGAMTVDAAVTGA), and 539-561 (VPYAVGNVVLTVLGPIIVACTFV).

This sequence belongs to the AAE transporter (TC 2.A.81) family.

It is found in the cell membrane. This is an uncharacterized protein from Bradyrhizobium diazoefficiens (strain JCM 10833 / BCRC 13528 / IAM 13628 / NBRC 14792 / USDA 110).